Here is a 179-residue protein sequence, read N- to C-terminus: Interleukin-10 (179 aa).

Residues 1 to 19 (MPSSSALLCCLVFLAGVAA) form the signal peptide. Cystine bridges form between Cys-31/Cys-127 and Cys-81/Cys-133. An N-linked (GlcNAc...) asparagine glycan is attached at Asn-135.

The protein belongs to the IL-10 family. In terms of assembly, homodimer. Interacts with IL10RA and IL10RB.

It localises to the secreted. In terms of biological role, major immune regulatory cytokine that acts on many cells of the immune system where it has profound anti-inflammatory functions, limiting excessive tissue disruption caused by inflammation. Mechanistically, IL10 binds to its heterotetrameric receptor comprising IL10RA and IL10RB leading to JAK1 and STAT2-mediated phosphorylation of STAT3. In turn, STAT3 translocates to the nucleus where it drives expression of anti-inflammatory mediators. Targets antigen-presenting cells (APCs) such as macrophages and monocytes and inhibits their release of pro-inflammatory cytokines including granulocyte-macrophage colony-stimulating factor /GM-CSF, granulocyte colony-stimulating factor/G-CSF, IL-1 alpha, IL-1 beta, IL-6, IL-8 and TNF-alpha. Also interferes with antigen presentation by reducing the expression of MHC-class II and co-stimulatory molecules, thereby inhibiting their ability to induce T cell activation. In addition, controls the inflammatory response of macrophages by reprogramming essential metabolic pathways including mTOR signaling. In Cervus elaphus (Red deer), this protein is Interleukin-10 (IL10).